A 722-amino-acid chain; its full sequence is Glycine--tRNA ligase beta subunit (722 aa).

Belongs to the class-II aminoacyl-tRNA synthetase family. Tetramer of two alpha and two beta subunits.

The protein localises to the cytoplasm. The catalysed reaction is tRNA(Gly) + glycine + ATP = glycyl-tRNA(Gly) + AMP + diphosphate. The sequence is that of Glycine--tRNA ligase beta subunit (glyS) from Xylella fastidiosa (strain 9a5c).